The chain runs to 240 residues: Triosephosphate isomerase (240 aa).

8-10 (NWK) contacts substrate. Residue His93 is the Electrophile of the active site. Glu160 serves as the catalytic Proton acceptor. Substrate is bound at residue Gly166.

It belongs to the triosephosphate isomerase family. As to quaternary structure, homodimer.

It localises to the cytoplasm. It carries out the reaction D-glyceraldehyde 3-phosphate = dihydroxyacetone phosphate. It functions in the pathway carbohydrate biosynthesis; gluconeogenesis. It participates in carbohydrate degradation; glycolysis; D-glyceraldehyde 3-phosphate from glycerone phosphate: step 1/1. In terms of biological role, involved in the gluconeogenesis. Catalyzes stereospecifically the conversion of dihydroxyacetone phosphate (DHAP) to D-glyceraldehyde-3-phosphate (G3P). This chain is Triosephosphate isomerase, found in Ehrlichia chaffeensis (strain ATCC CRL-10679 / Arkansas).